Consider the following 613-residue polypeptide: Methionine--tRNA ligase (613 aa).

A 'HIGH' region motif is present at residues 15–25; that stretch reads PYANGPRHIGH. Residues Cys147, Cys150, Cys160, and Cys163 each coordinate Zn(2+). The 'KMSKS' region motif lies at 351–355; sequence KFSSS. Ser354 lines the ATP pocket.

This sequence belongs to the class-I aminoacyl-tRNA synthetase family. MetG type 1 subfamily. In terms of assembly, monomer. It depends on Zn(2+) as a cofactor.

The protein localises to the cytoplasm. It catalyses the reaction tRNA(Met) + L-methionine + ATP = L-methionyl-tRNA(Met) + AMP + diphosphate. Its function is as follows. Is required not only for elongation of protein synthesis but also for the initiation of all mRNA translation through initiator tRNA(fMet) aminoacylation. This chain is Methionine--tRNA ligase, found in Corynebacterium efficiens (strain DSM 44549 / YS-314 / AJ 12310 / JCM 11189 / NBRC 100395).